The following is a 640-amino-acid chain: ATP-dependent DNA helicase YoaA (640 aa).

In terms of domain architecture, Helicase ATP-binding spans 16-278 (ELSQNIKGFR…KDMQQLGTTS (263 aa)). An ATP-binding site is contributed by 51–58 (AGTGTGKT). Cys-114 serves as a coordination point for [4Fe-4S] cluster. The DEAH box signature appears at 125–128 (GVLG). Cys-174, Cys-179, and Cys-185 together coordinate [4Fe-4S] cluster. The DEAH box motif lies at 231–234 (DEAH). Residues 458–634 (SLGEILLPVI…SRTRDLNKVI (177 aa)) enclose the Helicase C-terminal domain.

Belongs to the helicase family. DinG subfamily. Requires [4Fe-4S] cluster as cofactor.

The catalysed reaction is Couples ATP hydrolysis with the unwinding of duplex DNA at the replication fork by translocating in the 5'-3' direction. This creates two antiparallel DNA single strands (ssDNA). The leading ssDNA polymer is the template for DNA polymerase III holoenzyme which synthesizes a continuous strand.. It carries out the reaction ATP + H2O = ADP + phosphate + H(+). Functionally, probably a 5'-3' DNA helicase. The sequence is that of ATP-dependent DNA helicase YoaA from Haemophilus influenzae (strain ATCC 51907 / DSM 11121 / KW20 / Rd).